A 238-amino-acid chain; its full sequence is uncharacterized protein (238 aa).

An N-terminal signal peptide occupies residues 1–20 (MNNVKLLIAGSAFFAMSAQA).

This sequence to E.coli GltF.

This is an uncharacterized protein from Escherichia coli (strain K12).